Here is a 398-residue protein sequence, read N- to C-terminus: Fatty-acid-binding protein 2 (398 aa).

3 residues coordinate dodecanoate: Arg-222, Tyr-235, and Ser-302.

It belongs to the chalcone isomerase family. In terms of tissue distribution, expressed in developing cotyledons, young seedlings, roots, seeds, embryos, macrospores, preanthesis and tapetum. Restricted to developing and reproductive tissues.

The protein resides in the plastid. The protein localises to the chloroplast stroma. Fatty-acid-binding protein. Associates with saturated fatty acid. This Arabidopsis thaliana (Mouse-ear cress) protein is Fatty-acid-binding protein 2 (FAP2).